A 509-amino-acid polypeptide reads, in one-letter code: Maturase K (509 aa).

This sequence belongs to the intron maturase 2 family. MatK subfamily.

It is found in the plastid. Its subcellular location is the chloroplast. Its function is as follows. Usually encoded in the trnK tRNA gene intron. Probably assists in splicing its own and other chloroplast group II introns. This is Maturase K from Hottonia palustris (Water-violet).